A 348-amino-acid chain; its full sequence is Phenylalanine--tRNA ligase alpha subunit (348 aa).

Residue E259 participates in Mg(2+) binding.

This sequence belongs to the class-II aminoacyl-tRNA synthetase family. Phe-tRNA synthetase alpha subunit type 1 subfamily. Tetramer of two alpha and two beta subunits. The cofactor is Mg(2+).

The protein resides in the cytoplasm. The enzyme catalyses tRNA(Phe) + L-phenylalanine + ATP = L-phenylalanyl-tRNA(Phe) + AMP + diphosphate + H(+). This Lacticaseibacillus paracasei (strain ATCC 334 / BCRC 17002 / CCUG 31169 / CIP 107868 / KCTC 3260 / NRRL B-441) (Lactobacillus paracasei) protein is Phenylalanine--tRNA ligase alpha subunit.